The sequence spans 526 residues: Threonine synthase 1, chloroplastic (526 aa).

Residues 1-40 (MASSCLFNASVSSLNPKQDPIRRHRSTSLLRHRPVVISCT) constitute a chloroplast transit peptide. Residues 142 to 144 (PYG), 165 to 167 (SAF), asparagine 172, leucine 173, lysine 181, and asparagine 187 each bind S-adenosyl-L-methionine. An N6-(pyridoxal phosphate)lysine modification is found at lysine 203. Residues 335 to 339 (GNLGN) and threonine 472 each bind pyridoxal 5'-phosphate.

This sequence belongs to the threonine synthase family. In terms of assembly, homodimer. Requires pyridoxal 5'-phosphate as cofactor.

The protein resides in the plastid. It localises to the chloroplast. It catalyses the reaction O-phospho-L-homoserine + H2O = L-threonine + phosphate. The protein operates within amino-acid biosynthesis; L-threonine biosynthesis; L-threonine from L-aspartate: step 5/5. Allosterically activated by S-adenosyl-L-methionine (SAM). Activated by S-adenosyl-L-ethionine, 5'-amino-5'-deoxyadenosine, sinefungin and 5'-deoxy-5-methylthioadenosine. Inhibited by AMP. Catalyzes the gamma-elimination of phosphate from L-phosphohomoserine and the beta-addition of water to produce L-threonine. The polypeptide is Threonine synthase 1, chloroplastic (TS1) (Arabidopsis thaliana (Mouse-ear cress)).